We begin with the raw amino-acid sequence, 143 residues long: Nucleoside diphosphate kinase (143 aa).

6 residues coordinate ATP: Lys-11, Phe-59, Arg-87, Thr-93, Arg-104, and Asn-114. The Pros-phosphohistidine intermediate role is filled by His-117.

Belongs to the NDK family. In terms of assembly, homotetramer. It depends on Mg(2+) as a cofactor.

It is found in the cytoplasm. It catalyses the reaction a 2'-deoxyribonucleoside 5'-diphosphate + ATP = a 2'-deoxyribonucleoside 5'-triphosphate + ADP. The enzyme catalyses a ribonucleoside 5'-diphosphate + ATP = a ribonucleoside 5'-triphosphate + ADP. Functionally, major role in the synthesis of nucleoside triphosphates other than ATP. The ATP gamma phosphate is transferred to the NDP beta phosphate via a ping-pong mechanism, using a phosphorylated active-site intermediate. The sequence is that of Nucleoside diphosphate kinase from Klebsiella pneumoniae (strain 342).